A 466-amino-acid polypeptide reads, in one-letter code: MSSQPNPTSHPEAASAASAASNDPVVKIDSLDMEARGVGRLENEDGTPGKVIFVEGALPGETVAYRSYRRKPSYEQAHLVEVKQASVMRVKPGCQHFGVCGGCSMQHLDSRAQLAIKQRVLEDNLWHLSKVKPDVVFRPIAGPDWGYRYRARLTVRHVVKKGGVLVGFHERKSSYVADMTHCEILPPHVSAMLVPLRELVGGLSIHDRMPQIELAVGAEVTALVLRVLEPLNDADKDLLRAFADQHQVQFWLQPKGPDTVYPFYPAEQELAYTLPEFGIRMPFKPTDFTQVNHQINRVLIGRALRLLDAKPTDRLLDLFCGIGNFTLPLATQGASVMGIEGSEVLTTRALANAEYNGLAAKTSFACRNLFEVTAEDIAALGRFDRWLVDPPREGALAVCKALAELSQAGSDVLPKRIVYVSCSPATLARDAGLLVHEAGYRLAGAGVVNMFPHTSHVESIAVFERD.

The disordered stretch occupies residues 1 to 22 (MSSQPNPTSHPEAASAASAASN). Positions 17–81 (ASAASNDPVV…PSYEQAHLVE (65 aa)) constitute a TRAM domain. Positions 94, 100, 103, and 182 each coordinate [4Fe-4S] cluster. S-adenosyl-L-methionine is bound by residues Gln-290, Phe-319, Asn-324, Glu-340, Asn-368, and Asp-389. Cys-422 serves as the catalytic Nucleophile.

It belongs to the class I-like SAM-binding methyltransferase superfamily. RNA M5U methyltransferase family. RlmD subfamily.

The enzyme catalyses uridine(1939) in 23S rRNA + S-adenosyl-L-methionine = 5-methyluridine(1939) in 23S rRNA + S-adenosyl-L-homocysteine + H(+). Its function is as follows. Catalyzes the formation of 5-methyl-uridine at position 1939 (m5U1939) in 23S rRNA. The chain is 23S rRNA (uracil(1939)-C(5))-methyltransferase RlmD from Cupriavidus metallidurans (strain ATCC 43123 / DSM 2839 / NBRC 102507 / CH34) (Ralstonia metallidurans).